A 226-amino-acid chain; its full sequence is Brachyurin (226 aa).

The Peptidase S1 domain occupies 1-223; it reads IVGGVEAVPN…FLDWIQTQTG (223 aa). An intrachain disulfide couples cysteine 26 to cysteine 42. Residues histidine 41 and aspartate 87 each act as charge relay system in the active site. Cystine bridges form between cysteine 151-cysteine 164 and cysteine 174-cysteine 200. Serine 178 acts as the Charge relay system in catalysis.

The protein belongs to the peptidase S1 family.

It carries out the reaction Hydrolysis of proteins, with broad specificity for peptide bonds. Native collagen is cleaved about 75% of the length of the molecule from the N-terminus. Low activity on small molecule substrates of both trypsin and chymotrypsin.. This enzyme is a serine protease capable of degrading the native triple helix of collagen. The polypeptide is Brachyurin (Leptuca pugilator (Atlantic sand fiddler crab)).